Consider the following 934-residue polypeptide: Translation initiation factor IF-2 (934 aa).

The disordered stretch occupies residues A54–A323. Low complexity-rich tracts occupy residues P80–P154, R185–G197, G206–A231, and R238–P250. The span at G260–P303 shows a compositional bias: gly residues. The segment covering R308 to K317 has biased composition (basic residues). One can recognise a tr-type G domain in the interval Q430–D602. The segment at G439 to T446 is G1. GTP is bound at residue G439–T446. Residues G464–H468 form a G2 region. Residues D489 to G492 form a G3 region. Residues D489 to H493 and N543 to D546 contribute to the GTP site. The tract at residues N543–D546 is G4. Positions S579–K581 are G5.

The protein belongs to the TRAFAC class translation factor GTPase superfamily. Classic translation factor GTPase family. IF-2 subfamily.

It localises to the cytoplasm. Its function is as follows. One of the essential components for the initiation of protein synthesis. Protects formylmethionyl-tRNA from spontaneous hydrolysis and promotes its binding to the 30S ribosomal subunits. Also involved in the hydrolysis of GTP during the formation of the 70S ribosomal complex. This chain is Translation initiation factor IF-2, found in Corynebacterium urealyticum (strain ATCC 43042 / DSM 7109).